We begin with the raw amino-acid sequence, 297 residues long: Formylmethanofuran--tetrahydromethanopterin formyltransferase (297 aa).

The protein belongs to the FTR family. As to quaternary structure, homotetramer.

The protein localises to the cytoplasm. The enzyme catalyses N-formylmethanofuran + 5,6,7,8-tetrahydromethanopterin + H(+) = N(5)-formyl-5,6,7,8-tetrahydromethanopterin + methanofuran. It functions in the pathway one-carbon metabolism; methanogenesis from CO(2); 5,10-methenyl-5,6,7,8-tetrahydromethanopterin from CO(2): step 2/3. Its function is as follows. Catalyzes the reversible transfer of a formyl group from formylmethanofuran (formyl-MFR) to tetrahydromethanopterin (H(4)MPT) to produce 5-formyl tetrahydromethanopterin (5-formyl-H(4)MPT) and methanofuran (MFR). The chain is Formylmethanofuran--tetrahydromethanopterin formyltransferase from Methanococcoides burtonii (strain DSM 6242 / NBRC 107633 / OCM 468 / ACE-M).